A 1196-amino-acid polypeptide reads, in one-letter code: Ice nucleation protein (1196 aa).

Residues 172–1147 (ATYGSTLSGD…LSAGEDSTLI (976 aa)) form an octapeptide periodicity region. Disordered regions lie at residues 269–304 (GYGS…GYGS), 319–352 (GSTQ…GYGS), and 415–442 (GSTQ…GSNL). Composition is skewed to polar residues over residues 271–298 (GSTQ…GSNL) and 319–346 (GSTQ…GSNL).

Belongs to the bacterial ice nucleation protein family. As to quaternary structure, membrane environment or aggregation seems to be required for ice nucleation activity.

It localises to the cell outer membrane. Functionally, ice nucleation proteins enable bacteria to nucleate crystallization in supercooled water. In Pseudomonas syringae, this protein is Ice nucleation protein (inaV).